A 166-amino-acid chain; its full sequence is Endoribonuclease YbeY (166 aa).

Zn(2+)-binding residues include His-125, His-129, and His-135.

The protein belongs to the endoribonuclease YbeY family. It depends on Zn(2+) as a cofactor.

The protein localises to the cytoplasm. Single strand-specific metallo-endoribonuclease involved in late-stage 70S ribosome quality control and in maturation of the 3' terminus of the 16S rRNA. In Alkalilimnicola ehrlichii (strain ATCC BAA-1101 / DSM 17681 / MLHE-1), this protein is Endoribonuclease YbeY.